The sequence spans 442 residues: UDP-glucosyltransferase 29 (442 aa).

Histidine 20 (proton acceptor) is an active-site residue. Position 20 (histidine 20) interacts with an anthocyanidin. Residue aspartate 116 is the Charge relay of the active site. Residues threonine 138, alanine 318, glutamine 320, histidine 335, tryptophan 338, serine 340, glutamate 343, aspartate 359, and glutamine 360 each coordinate UDP-alpha-D-glucose.

This sequence belongs to the UDP-glycosyltransferase family. Expressed at higher levels in roots than in leaves.

It catalyses the reaction (20S)-ginsenoside F2 + UDP-alpha-D-glucose = (20S)-ginsenoside Rd + UDP + H(+). The enzyme catalyses (20S)-ginsenoside Rh2 + UDP-alpha-D-glucose = (20S)-ginsenoside Rg3 + UDP + H(+). Its pathway is secondary metabolite biosynthesis; terpenoid biosynthesis. Its function is as follows. Component of the dammarane-type triterpene saponins (e.g. PPD-type ginsenosides or panaxosides) biosynthetic pathway. Glycosyltransferase that catalyzes the conversion of ginsenoside Rh2 to ginsenoside Rg3. Triggers the biosynthesis of ginsenoside Rd from ginsenoside F2. The chain is UDP-glucosyltransferase 29 from Panax ginseng (Korean ginseng).